Reading from the N-terminus, the 83-residue chain is RNA-binding protein Hfq (83 aa).

Positions 9–68 (DPYLNALRKERIPVSIFLVNGIKLQGQIESFDQFVILLKNTVSQMVYKHAISTVVPARNV) constitute a Sm domain.

It belongs to the Hfq family. As to quaternary structure, homohexamer.

In terms of biological role, RNA chaperone that binds small regulatory RNA (sRNAs) and mRNAs to facilitate mRNA translational regulation in response to envelope stress, environmental stress and changes in metabolite concentrations. Also binds with high specificity to tRNAs. This chain is RNA-binding protein Hfq, found in Marinobacter nauticus (strain ATCC 700491 / DSM 11845 / VT8) (Marinobacter aquaeolei).